The chain runs to 301 residues: Acetylglutamate kinase (301 aa).

Substrate-binding positions include 68 to 69, Arg90, and Asn195; that span reads GG.

It belongs to the acetylglutamate kinase family. ArgB subfamily.

It is found in the cytoplasm. It carries out the reaction N-acetyl-L-glutamate + ATP = N-acetyl-L-glutamyl 5-phosphate + ADP. It functions in the pathway amino-acid biosynthesis; L-arginine biosynthesis; N(2)-acetyl-L-ornithine from L-glutamate: step 2/4. In terms of biological role, catalyzes the ATP-dependent phosphorylation of N-acetyl-L-glutamate. The polypeptide is Acetylglutamate kinase (Pseudomonas entomophila (strain L48)).